Reading from the N-terminus, the 1230-residue chain is Myosin-1 (1230 aa).

Residues 1-32 are disordered; sequence MGISRRPKADKNASAADSAPGGKPNIQKAQFD. In terms of domain architecture, Myosin motor spans 39–713; that stretch reads VGVSDLTLIS…TLFALEHMRD (675 aa). Residue 132-139 coordinates ATP; sequence GESGAGKT. Positions 403–485 are actin-binding; that stretch reads SIGILDIYGF…PGVFSAMKDA (83 aa). IQ domains are found at residues 717 to 737 and 738 to 763; these read HNMAARIQRVWRAFLQIRIEA and ATRIQRMFRKKREGKEFLELREKGHQ. In terms of domain architecture, TH1 spans 771-961; sequence RRRYSLLGSR…TIHTQAGEPP (191 aa). Disordered stretches follow at residues 945–1018, 1033–1065, and 1116–1230; these read QDHY…AARP, TRNTSVQSTQSTRAVPPPPPPAPPAPPPAPVSK, and AYLE…EDDW. The segment covering 1033 to 1045 has biased composition (polar residues); sequence TRNTSVQSTQSTR. Composition is skewed to pro residues over residues 1047–1062 and 1122–1142; these read VPPPPPPAPPAPPPAP and TPPPPPPVATRPAPPPAPGPP. The 60-residue stretch at 1064–1123 folds into the SH3 domain; it reads SKEPQYRVLYEFAGQSANEFSLKQGEIVTVLQKETNGWWLTKNVRGQGWAPTAYLEEVTP. Over residues 1179 to 1214 the composition is skewed to low complexity; it reads RDSGMSISSNGSGNNSGRSTPTPSLAGGLAEALRAR.

It belongs to the TRAFAC class myosin-kinesin ATPase superfamily. Myosin family.

The protein resides in the cytoplasm. Its subcellular location is the cytoskeleton. The protein localises to the actin patch. Its function is as follows. Type-I myosin implicated in the organization of the actin cytoskeleton. Required for proper actin cytoskeleton polarization. At the cell cortex, assembles in patch-like structures together with proteins from the actin-polymerizing machinery and promotes actin assembly. Functions as actin nucleation-promoting factor (NPF) for the Arp2/3 complex. This Sclerotinia sclerotiorum (strain ATCC 18683 / 1980 / Ss-1) (White mold) protein is Myosin-1 (myoA).